We begin with the raw amino-acid sequence, 418 residues long: ATP-dependent RNA helicase RhlB (418 aa).

The Q motif signature appears at 9–37 (TKFADLPLEKSLISGLTSQGYEYCTPIQA). Residues 40–219 (LPITLTGKDI…FEHMNDPESI (180 aa)) enclose the Helicase ATP-binding domain. 53–60 (AQTGTGKT) lines the ATP pocket. The DEAD box motif lies at 165-168 (DEAD). The 148-residue stretch at 243–390 (KILLLLSLIE…CSEYDKNAML (148 aa)) folds into the Helicase C-terminal domain.

This sequence belongs to the DEAD box helicase family. RhlB subfamily. Component of the RNA degradosome, which is a multiprotein complex involved in RNA processing and mRNA degradation.

The protein resides in the cytoplasm. It carries out the reaction ATP + H2O = ADP + phosphate + H(+). DEAD-box RNA helicase involved in RNA degradation. Has RNA-dependent ATPase activity and unwinds double-stranded RNA. This Psychromonas ingrahamii (strain DSM 17664 / CCUG 51855 / 37) protein is ATP-dependent RNA helicase RhlB.